The chain runs to 134 residues: Profilin-2 (134 aa).

An intrachain disulfide couples Cys13 to Cys118. The Involved in PIP2 interaction motif lies at 84-100; the sequence is AVIRGKKGSGGITIKKT. Phosphothreonine is present on Thr114.

The protein belongs to the profilin family. As to quaternary structure, occurs in many kinds of cells as a complex with monomeric actin in a 1:1 ratio. Phosphorylated by MAP kinases.

The protein resides in the cytoplasm. It is found in the cytoskeleton. Functionally, binds to actin and affects the structure of the cytoskeleton. At high concentrations, profilin prevents the polymerization of actin, whereas it enhances it at low concentrations. The protein is Profilin-2 of Olea europaea (Common olive).